A 502-amino-acid polypeptide reads, in one-letter code: uncharacterized protein (502 aa).

2 helical membrane passes run 10-30 (NLTL…IXIF) and 473-493 (FSLI…FGLV).

The protein localises to the cell membrane. This is an uncharacterized protein from Borreliella burgdorferi (strain ATCC 35210 / DSM 4680 / CIP 102532 / B31) (Borrelia burgdorferi).